The chain runs to 1479 residues: ABC transporter ecdL (1479 aa).

Helical transmembrane passes span 32–52 (LLFE…SVAL), 82–102 (LSNA…WLSF), and 142–162 (IASI…VEAM). Residues Asn-183 and Asn-234 are each glycosylated (N-linked (GlcNAc...) asparagine). 2 consecutive transmembrane segments (helical) span residues 251 to 271 (WGGF…PFLV) and 291 to 311 (SGLI…TAAF). The ABC transmembrane type-1 1 domain maps to 258-535 (LCLIGVNYAQ…FVESLMGLRQ (278 aa)). Residue Asn-345 is glycosylated (N-linked (GlcNAc...) asparagine). 2 helical membrane-spanning segments follow: residues 365 to 382 (LHET…LWLL) and 391 to 411 (VAAA…SGLL). The N-linked (GlcNAc...) asparagine glycan is linked to Asn-427. The next 2 membrane-spanning stretches (helical) occupy residues 469 to 489 (LLVA…TFAF) and 503 to 523 (PLLA…GQAV). The 229-residue stretch at 607–835 (IVLQNHTASW…GSSLRLEELV (229 aa)) folds into the ABC transporter 1 domain. Residues Asn-611 and Asn-628 are each glycosylated (N-linked (GlcNAc...) asparagine). 641-648 (GPIGSGKS) serves as a coordination point for ATP. Residues Asn-793 and Asn-797 are each glycosylated (N-linked (GlcNAc...) asparagine). Transmembrane regions (helical) follow at residues 885 to 905 (TIGW…VVAL), 955 to 975 (LFAV…LHLM), 1028 to 1048 (ALIG…VIVY), 1052 to 1072 (YLAA…MFYL), and 1135 to 1155 (IWLT…LVSI). The ABC transmembrane type-1 2 domain occupies 932–1193 (IWLKFWTEAN…LVYNWTALEN (262 aa)). Asn-1161 carries N-linked (GlcNAc...) asparagine glycosylation. Residues 1165-1185 (ASIGLALVNLIAFGANMKGLV) form a helical membrane-spanning segment. The N-linked (GlcNAc...) asparagine glycan is linked to Asn-1187. The ABC transporter 2 domain occupies 1230-1461 (IKFKSVTASY…RSIFASLLRS (232 aa)). An ATP-binding site is contributed by 1264–1271 (GRTGCGKS). The segment at 1460–1479 (RSGDEEPGNGHKHESEGEEE) is disordered. Residues 1461–1479 (SGDEEPGNGHKHESEGEEE) show a composition bias toward basic and acidic residues.

It belongs to the ABC transporter superfamily. ABCC family. Conjugate transporter (TC 3.A.1.208) subfamily.

The protein localises to the cell membrane. Functionally, ABC transporter; part of the gene cluster that mediates the biosynthesis of echinocandin B, a fungal lipidated cyclic hexapeptide that acts as an antifungal agent. In Aspergillus rugulosus (Emericella rugulosa), this protein is ABC transporter ecdL.